Here is a 146-residue protein sequence, read N- to C-terminus: Protein new-glue 3 (146 aa).

Residues 1–23 (MRYSCVLLLLATVACLLIPQTGG) form the signal peptide. The interval 23 to 146 (GSTATTTSTS…RRARSARRLS (124 aa)) is disordered. Low complexity predominate over residues 24-66 (STATTTSTSASATTTTSASATTTTASDTTTTTAATTTTSSSSS). Tandem repeats lie at residues 31-38 (TSASATTT), 39-46 (TSASATTT), 47-53 (TASDTTT), and 54-61 (TTAATTTT). Positions 31–61 (TSASATTTTSASATTTTASDTTTTTAATTTT) are 4 X 8 AA approximate tandem repeats of T-S-A-S-A-T-T-T. Basic residues predominate over residues 67-92 (KSKKKKRTYHYTRHVYRPKRIRHIYR). Residues 93–106 (HKADDDESSTDRTS) show a composition bias toward basic and acidic residues. Residues 116-132 (SSSSSSSGSTSSRSGNS) are compositionally biased toward low complexity. Residues 133–146 (RIRRRRARSARRLS) are compositionally biased toward basic residues.

Salivary gland specific.

The protein resides in the secreted. The polypeptide is Protein new-glue 3 (ng3) (Drosophila melanogaster (Fruit fly)).